Consider the following 368-residue polypeptide: 4-hydroxy-3-methylbut-2-en-1-yl diphosphate synthase (flavodoxin) (368 aa).

Positions 271, 274, 306, and 313 each coordinate [4Fe-4S] cluster.

This sequence belongs to the IspG family. [4Fe-4S] cluster is required as a cofactor.

The enzyme catalyses (2E)-4-hydroxy-3-methylbut-2-enyl diphosphate + oxidized [flavodoxin] + H2O + 2 H(+) = 2-C-methyl-D-erythritol 2,4-cyclic diphosphate + reduced [flavodoxin]. It participates in isoprenoid biosynthesis; isopentenyl diphosphate biosynthesis via DXP pathway; isopentenyl diphosphate from 1-deoxy-D-xylulose 5-phosphate: step 5/6. In terms of biological role, converts 2C-methyl-D-erythritol 2,4-cyclodiphosphate (ME-2,4cPP) into 1-hydroxy-2-methyl-2-(E)-butenyl 4-diphosphate. The polypeptide is 4-hydroxy-3-methylbut-2-en-1-yl diphosphate synthase (flavodoxin) (Haemophilus influenzae (strain ATCC 51907 / DSM 11121 / KW20 / Rd)).